A 342-amino-acid polypeptide reads, in one-letter code: Galactose mutarotase (342 aa).

Position 14 is a phosphoserine (Ser14). Residues 81–82 (NR) and His107 contribute to the beta-D-galactose site. Position 124 is a phosphoserine (Ser124). The active-site Proton donor is His176. Residues 176–178 (HSY), Asp243, Gln279, and Glu307 each bind beta-D-galactose. Glu307 (proton acceptor) is an active-site residue.

This sequence belongs to the aldose epimerase family. As to quaternary structure, monomer.

It is found in the cytoplasm. The enzyme catalyses alpha-D-galactose = beta-D-galactose. The catalysed reaction is alpha-D-glucose = beta-D-glucose. The protein operates within carbohydrate metabolism; hexose metabolism. It functions in the pathway carbohydrate metabolism; galactose metabolism. Functionally, mutarotase that catalyzes the interconversion of beta-D-galactose and alpha-D-galactose during galactose metabolism. Beta-D-galactose is metabolized in the liver into glucose 1-phosphate, the primary metabolic fuel, by the action of four enzymes that constitute the Leloir pathway: GALM, GALK1 (galactokinase), GALT (galactose-1-phosphate uridylyltransferase) and GALE (UDP-galactose-4'-epimerase). Involved in the maintenance of the equilibrium between the beta- and alpha-anomers of galactose, therefore ensuring a sufficient supply of the alpha-anomer for GALK1. Also active on D-glucose although shows a preference for galactose over glucose. In Rattus norvegicus (Rat), this protein is Galactose mutarotase (Galm).